Reading from the N-terminus, the 428-residue chain is Adenylosuccinate synthetase (428 aa).

GTP is bound by residues 12 to 18 (GDEGKGK) and 40 to 42 (GHS). Aspartate 13 functions as the Proton acceptor in the catalytic mechanism. Mg(2+) is bound by residues aspartate 13 and glycine 40. IMP is bound by residues 13–16 (DEGK), 38–41 (NAGH), threonine 128, arginine 142, glutamine 223, threonine 238, and arginine 302. Residue histidine 41 is the Proton donor of the active site. 298-304 (VTTGRPR) contributes to the substrate binding site. GTP contacts are provided by residues arginine 304, 330 to 332 (KLD), and 412 to 414 (GTG).

This sequence belongs to the adenylosuccinate synthetase family. As to quaternary structure, homodimer. Mg(2+) is required as a cofactor.

The protein localises to the cytoplasm. It carries out the reaction IMP + L-aspartate + GTP = N(6)-(1,2-dicarboxyethyl)-AMP + GDP + phosphate + 2 H(+). Its pathway is purine metabolism; AMP biosynthesis via de novo pathway; AMP from IMP: step 1/2. Plays an important role in the de novo pathway of purine nucleotide biosynthesis. Catalyzes the first committed step in the biosynthesis of AMP from IMP. This is Adenylosuccinate synthetase from Bifidobacterium longum (strain NCC 2705).